Here is a 335-residue protein sequence, read N- to C-terminus: Histidinol-phosphate aminotransferase (335 aa).

Lys202 carries the post-translational modification N6-(pyridoxal phosphate)lysine.

It belongs to the class-II pyridoxal-phosphate-dependent aminotransferase family. Histidinol-phosphate aminotransferase subfamily. In terms of assembly, homodimer. Pyridoxal 5'-phosphate is required as a cofactor.

It carries out the reaction L-histidinol phosphate + 2-oxoglutarate = 3-(imidazol-4-yl)-2-oxopropyl phosphate + L-glutamate. It functions in the pathway amino-acid biosynthesis; L-histidine biosynthesis; L-histidine from 5-phospho-alpha-D-ribose 1-diphosphate: step 7/9. The sequence is that of Histidinol-phosphate aminotransferase from Thermotoga neapolitana (strain ATCC 49049 / DSM 4359 / NBRC 107923 / NS-E).